We begin with the raw amino-acid sequence, 709 residues long: Elongation factor G (709 aa).

One can recognise a tr-type G domain in the interval 8–290 (NRYRNIGISA…AVIQYMPAPQ (283 aa)). GTP is bound by residues 17–24 (AHIDAGKT), 88–92 (DTPGH), and 142–145 (NKMD).

The protein belongs to the TRAFAC class translation factor GTPase superfamily. Classic translation factor GTPase family. EF-G/EF-2 subfamily.

The protein resides in the cytoplasm. Catalyzes the GTP-dependent ribosomal translocation step during translation elongation. During this step, the ribosome changes from the pre-translocational (PRE) to the post-translocational (POST) state as the newly formed A-site-bound peptidyl-tRNA and P-site-bound deacylated tRNA move to the P and E sites, respectively. Catalyzes the coordinated movement of the two tRNA molecules, the mRNA and conformational changes in the ribosome. The sequence is that of Elongation factor G from Psychrobacter sp. (strain PRwf-1).